Consider the following 1446-residue polypeptide: Sister chromatid cohesion protein PDS5 homolog B (1446 aa).

The HEAT repeat unit spans residues 383 to 419; that stretch reads LLVNDHLLNFVRERTLDKRWRVRKEAMMGLAQIYKKY. N6-acetyllysine is present on Lys1136. A compositionally biased stretch (polar residues) spans 1137-1155; that stretch reads PLSSAGKQSQTKSSRMETV. Positions 1137-1446 are disordered; sequence PLSSAGKQSQ…RRRSSKRERR (310 aa). A phosphoserine mark is found at Ser1140, Ser1162, Ser1166, Ser1176, Ser1182, and Ser1191. The span at 1156-1167 shows a compositional bias: low complexity; the sequence is SNASSSSNPSSP. Basic and acidic residues predominate over residues 1172-1184; the sequence is GRLDSSEMDHSEN. Basic and acidic residues-rich tracts occupy residues 1196–1212 and 1223–1241; these read KKSD…LEKP and PEEK…EQKP. Over residues 1243–1252 the composition is skewed to basic residues; the sequence is GSQRGRKRGR. The a.T hook 1 DNA-binding region spans 1247-1259; sequence GRKRGRTASDSDE. A Phosphothreonine modification is found at Thr1253. Phosphoserine is present on residues Ser1255 and Ser1257. The segment covering 1263–1272 has biased composition (basic and acidic residues); the sequence is PEEKRHKEEL. Ser1281 carries the post-translational modification Phosphoserine. Positions 1285-1297 form a DNA-binding region, a.T hook 2; the sequence is KGKRGRPPKPLGG. Basic residues-rich tracts occupy residues 1308–1317 and 1339–1351; these read TSKKGNKKKL and SKSK…KRAQ. Over residues 1353–1370 the composition is skewed to polar residues; it reads RAESPETSAVESTQSTPQ. Residues Ser1356 and Ser1364 each carry the phosphoserine modification. Thr1365 carries the post-translational modification Phosphothreonine. Position 1367 is a phosphoserine (Ser1367). Thr1368 carries the post-translational modification Phosphothreonine. The a.T hook 3 DNA-binding region spans 1370–1382; sequence QKGRGRPSKAPSP. A phosphoserine mark is found at Ser1381, Ser1415, and Ser1418. Positions 1421-1431 are enriched in acidic residues; the sequence is TTQEGAEEEDI. The span at 1436–1446 shows a compositional bias: basic residues; it reads VRRRSSKRERR.

Belongs to the PDS5 family. In terms of assembly, interacts with the cohesin complex. Interacts with RAD21; the interaction is direct. Interacts with WAPL (via FGF motifs) or CDCA5 (via the FGF motif); the interaction is direct, cohesin-dependent and competitive. As to expression, expressed in prostate.

The protein resides in the nucleus. In terms of biological role, regulator of sister chromatid cohesion in mitosis which may stabilize cohesin complex association with chromatin. May couple sister chromatid cohesion during mitosis to DNA replication. Cohesion ensures that chromosome partitioning is accurate in both meiotic and mitotic cells and plays an important role in DNA repair. Plays a role in androgen-induced proliferative arrest in prostate cells. The protein is Sister chromatid cohesion protein PDS5 homolog B (Pds5b) of Mus musculus (Mouse).